Consider the following 247-residue polypeptide: Probable transcriptional regulatory protein YPO2055/y2255/YP_1898 (247 aa).

It belongs to the TACO1 family.

It localises to the cytoplasm. In Yersinia pestis, this protein is Probable transcriptional regulatory protein YPO2055/y2255/YP_1898.